A 627-amino-acid polypeptide reads, in one-letter code: Probable inactive L-type lectin-domain containing receptor kinase III.1 (627 aa).

Residues 1 to 23 form the signal peptide; the sequence is MITFKSIALTIIFLSYFVSCVSS. Topologically, residues 24-303 are extracellular; it reads QRETKFLNHG…STEKKSNNTM (280 aa). The interval 26–262 is legume-lectin like; the sequence is ETKFLNHGFL…SHFVLGWSFN (237 aa). N-linked (GlcNAc...) asparagine glycosylation is found at N57, N78, N127, N184, N202, N209, and N230. The tract at residues 272-297 is disordered; it reads ITKLPSLPDPPPTLSPSPSPPVSTEK. Positions 278–292 are enriched in pro residues; the sequence is LPDPPPTLSPSPSPP. The N-linked (GlcNAc...) asparagine glycan is linked to N300. The chain crosses the membrane as a helical span at residues 304–324; it reads LIIIVAASATVALMILIFSGF. The Cytoplasmic portion of the chain corresponds to 325–627; sequence WFLRRDKIFF…PHDDYLFYGV (303 aa). A Protein kinase domain is found at 353–623; the sequence is FDNSKLLGER…TEALPHDDYL (271 aa). Residues 359-367 and K381 contribute to the ATP site; that span reads LGERNSGSF.

The protein in the C-terminal section; belongs to the protein kinase superfamily. Ser/Thr protein kinase family. This sequence in the N-terminal section; belongs to the leguminous lectin family.

The protein resides in the cell membrane. The polypeptide is Probable inactive L-type lectin-domain containing receptor kinase III.1 (LECRK31) (Arabidopsis thaliana (Mouse-ear cress)).